A 388-amino-acid chain; its full sequence is MKRAILIVLDSVGIGEMPDAHEYGDVGSNTIGNIAKARGGLHLPHLQRLGLGNIAPIQGVDPEASPQGCYGKMAERSPGKDTTTGHWEIAGVVLERAFPTFSKGFPEDFLQAFAERIGRQVIGNEVASGTEIIQRLGQEHVRTGKPIAYTSADSVFQIAAHEEVIPLEELYRICGIAREMLEGDLRVGRVIARPFLGEEGNFYRTTNRHDYAIEPPHKILLDMVKEKGLRVMAVGKIKDIYAGHGVTDHLASKGNRDGVEKTLAFIREKKPGLIMTNLVDFDMLYGHRNDVENYAQALEEFDGRLPEILASLEEEDILFITADHGCDPTTESTDHSREYVPLLVYGKKVVPGRNLGIRSSFADLGATIAEYLGTEELVNGRSFLGELI.

Mn(2+) contacts are provided by aspartate 10, aspartate 282, histidine 287, aspartate 323, histidine 324, and histidine 335.

Belongs to the phosphopentomutase family. It depends on Mn(2+) as a cofactor.

The protein resides in the cytoplasm. It catalyses the reaction 2-deoxy-alpha-D-ribose 1-phosphate = 2-deoxy-D-ribose 5-phosphate. The catalysed reaction is alpha-D-ribose 1-phosphate = D-ribose 5-phosphate. It participates in carbohydrate degradation; 2-deoxy-D-ribose 1-phosphate degradation; D-glyceraldehyde 3-phosphate and acetaldehyde from 2-deoxy-alpha-D-ribose 1-phosphate: step 1/2. In terms of biological role, isomerase that catalyzes the conversion of deoxy-ribose 1-phosphate (dRib-1-P) and ribose 1-phosphate (Rib-1-P) to deoxy-ribose 5-phosphate (dRib-5-P) and ribose 5-phosphate (Rib-5-P), respectively. The protein is Phosphopentomutase of Desulfitobacterium hafniense (strain DSM 10664 / DCB-2).